The sequence spans 80 residues: Protein KorB (80 aa).

DNA-binding regions (H-T-H motif) lie at residues 13–32 (AEAA…AELD) and 56–75 (NEVT…AEAE).

Repressor for the transcription of certain pIJ101 promoters, including those the from kilA and kilB loci. This chain is Protein KorB (korB), found in Streptomyces lividans.